A 281-amino-acid chain; its full sequence is Bis(5'-nucleosyl)-tetraphosphatase, symmetrical (281 aa).

It belongs to the Ap4A hydrolase family.

The enzyme catalyses P(1),P(4)-bis(5'-adenosyl) tetraphosphate + H2O = 2 ADP + 2 H(+). Functionally, hydrolyzes diadenosine 5',5'''-P1,P4-tetraphosphate to yield ADP. This is Bis(5'-nucleosyl)-tetraphosphatase, symmetrical from Acidovorax sp. (strain JS42).